Reading from the N-terminus, the 328-residue chain is Probable D,D-dipeptide transport ATP-binding protein DdpD (328 aa).

Residues 6 to 257 (LDIQQLHLSF…PRHPYTIGLL (252 aa)) enclose the ABC transporter domain. 42–49 (GESGSGKS) is an ATP binding site.

It belongs to the ABC transporter superfamily. The complex is composed of two ATP-binding proteins (DdpD and DdpF), two transmembrane proteins (DdpB and DdpC) and a solute-binding protein (DdpA).

The protein localises to the cell inner membrane. Part of the ABC transporter complex DdpABCDF, which is probably involved in D,D-dipeptide transport. Probably responsible for energy coupling to the transport system. The chain is Probable D,D-dipeptide transport ATP-binding protein DdpD from Escherichia coli (strain K12).